Here is a 369-residue protein sequence, read N- to C-terminus: MKETRRKRILLTGGGTGGHLFPAIAAAQQFCREYPGAEVLFVGTKRKMDAETLERYGFKGVAINSYGLKGKNMRELVKALLVLPISCLQALFILARFRPDLVLGVGGYVTGPVVAMAKLCRRPTLIHEQNSVPGLANRKLAKLVDRVCVSLPASASCFPADKVVFTGNPVRENLVALAAKAREVKEGVTLLVLGGSQGARSLNRLIVEAFVGVGSESLAGINLIHQTGTKDLAWVKQAYGDAGRDVWVEPFFKDMDAVYSQADILVSRAGATTLAELATLGKPVILVPYPFAADNHQQKNAEYYVQGGGALLFKESELTAPQLVEAVISIATNREQRERMEFNQRRLAPTDAAGKIVAVCRQLINRDEL.

UDP-N-acetyl-alpha-D-glucosamine contacts are provided by residues 16-18 (TGG), N130, R171, S196, and Q297.

This sequence belongs to the glycosyltransferase 28 family. MurG subfamily.

Its subcellular location is the cell inner membrane. It carries out the reaction di-trans,octa-cis-undecaprenyl diphospho-N-acetyl-alpha-D-muramoyl-L-alanyl-D-glutamyl-meso-2,6-diaminopimeloyl-D-alanyl-D-alanine + UDP-N-acetyl-alpha-D-glucosamine = di-trans,octa-cis-undecaprenyl diphospho-[N-acetyl-alpha-D-glucosaminyl-(1-&gt;4)]-N-acetyl-alpha-D-muramoyl-L-alanyl-D-glutamyl-meso-2,6-diaminopimeloyl-D-alanyl-D-alanine + UDP + H(+). It functions in the pathway cell wall biogenesis; peptidoglycan biosynthesis. In terms of biological role, cell wall formation. Catalyzes the transfer of a GlcNAc subunit on undecaprenyl-pyrophosphoryl-MurNAc-pentapeptide (lipid intermediate I) to form undecaprenyl-pyrophosphoryl-MurNAc-(pentapeptide)GlcNAc (lipid intermediate II). The chain is UDP-N-acetylglucosamine--N-acetylmuramyl-(pentapeptide) pyrophosphoryl-undecaprenol N-acetylglucosamine transferase from Desulfotalea psychrophila (strain LSv54 / DSM 12343).